We begin with the raw amino-acid sequence, 474 residues long: 3-isopropylmalate dehydratase large subunit (474 aa).

[4Fe-4S] cluster-binding residues include Cys-355, Cys-415, and Cys-418.

This sequence belongs to the aconitase/IPM isomerase family. LeuC type 1 subfamily. In terms of assembly, heterodimer of LeuC and LeuD. The cofactor is [4Fe-4S] cluster.

The catalysed reaction is (2R,3S)-3-isopropylmalate = (2S)-2-isopropylmalate. Its pathway is amino-acid biosynthesis; L-leucine biosynthesis; L-leucine from 3-methyl-2-oxobutanoate: step 2/4. Its function is as follows. Catalyzes the isomerization between 2-isopropylmalate and 3-isopropylmalate, via the formation of 2-isopropylmaleate. The chain is 3-isopropylmalate dehydratase large subunit from Shewanella sp. (strain MR-4).